Reading from the N-terminus, the 429-residue chain is Histidine--tRNA ligase (429 aa).

The protein belongs to the class-II aminoacyl-tRNA synthetase family. Homodimer.

It is found in the cytoplasm. The enzyme catalyses tRNA(His) + L-histidine + ATP = L-histidyl-tRNA(His) + AMP + diphosphate + H(+). The polypeptide is Histidine--tRNA ligase (Cyanothece sp. (strain PCC 7425 / ATCC 29141)).